Reading from the N-terminus, the 138-residue chain is Large ribosomal subunit protein uL16 (138 aa).

Basic residues predominate over residues 1–15 (MLSPRKVKYRKKQRG). Residues 1-21 (MLSPRKVKYRKKQRGRLSGEA) are disordered.

The protein belongs to the universal ribosomal protein uL16 family. In terms of assembly, part of the 50S ribosomal subunit.

Functionally, binds 23S rRNA and is also seen to make contacts with the A and possibly P site tRNAs. This chain is Large ribosomal subunit protein uL16, found in Borrelia duttonii (strain Ly).